The primary structure comprises 276 residues: F-box/LRR-repeat protein 20 (276 aa).

Residues 22–68 (AVINKKLPKELLLRIFSFLDVVTLCRCAQVSRAWNVLALDGSNWQRI) enclose the F-box domain. LRR repeat units lie at residues 74–100 (QRDIEGRVVENISKRCGGFLRKLSLRG), 101–126 (CLGVGDNALRTFAQNCRNIEVLSLNG), 127–152 (CTKTTDATCTSLSKFCSKLRHLDLAS), 153–178 (CTSITNMSLKALSEGCPLLEQLNISW), 179–204 (CDQVTKDGIQALVRGCGGLKALFLKG), 205–230 (CTQLEDEALKYIGAHCPELVTLNLQT), 231–256 (CLQITDEGLITICRGCHKLQSLCASG), and 257–276 (CSNITDAILNALGQNCPRLR).

As to quaternary structure, interacts with SKP1 and CUL1. Widely expressed, with highest expression in skeletal muscle, heart and brain.

It is found in the cytoplasm. Functionally, substrate-recognition component of the SCF (SKP1-CUL1-F-box protein)-type E3 ubiquitin ligase complex. Role in neural transmission. This is F-box/LRR-repeat protein 20 (Fbxl20) from Rattus norvegicus (Rat).